The following is a 225-amino-acid chain: Putative ankyrin repeat protein RBE_1025 (225 aa).

ANK repeat units follow at residues Leu-6–Pro-35, Asn-41–Ile-71, Thr-75–Ile-120, and Lys-124–Ile-153.

This Rickettsia bellii (strain RML369-C) protein is Putative ankyrin repeat protein RBE_1025.